The following is a 365-amino-acid chain: Endophilin-B1 (365 aa).

At M1 the chain carries N-acetylmethionine. Residues 1–30 form a membrane-binding amphipathic helix region; it reads MNIMDFNVKKLAADAGTFLSRAVQFTEEKL. Residues 1–37 form a required for membrane binding region; it reads MNIMDFNVKKLAADAGTFLSRAVQFTEEKLGQAEKTE. The 235-residue stretch at 27–261 folds into the BAR domain; the sequence is EEKLGQAEKT…LGSFPSNYVS (235 aa). T145 carries the post-translational modification Phosphothreonine; by CDK5. A coiled-coil region spans residues 156–185; it reads KTIAKERKLLQNKRLDLDAAKTRLKKAKAA. An SH3 domain is found at 305–365; the sequence is SSTRKARVLY…VPITYLELLN (61 aa).

The protein belongs to the endophilin family. As to quaternary structure, homodimer, and heterodimer with SH3GLB2. Binds BAX; induction of apoptosis augments BAX binding. Binds DNM1, HTT, AMPH, BIN1 and ARFGAP1. Interacts with UVRAG; UVRAG bridges the interaction to BECN1 indicative for an association with the PI3K complex II (PI3KC3-C2). In terms of processing, phosphorylated at Thr-145 by CDK5; this phosphorylation is required for autophagy induction in starved neurons and facilitates homodimerization. Expressed in brain, heart, lung and spleen. Low level in liver and testis.

It localises to the cytoplasm. Its subcellular location is the golgi apparatus membrane. The protein resides in the mitochondrion outer membrane. The protein localises to the cytoplasmic vesicle. It is found in the autophagosome membrane. It localises to the midbody. Its function is as follows. May be required for normal outer mitochondrial membrane dynamics. Required for coatomer-mediated retrograde transport in certain cells. May recruit other proteins to membranes with high curvature. May promote membrane fusion. Involved in activation of caspase-dependent apoptosis by promoting BAX/BAK1 activation. Involved in caspase-independent apoptosis during nutrition starvation and involved in the regulation of autophagy. Activates lipid kinase activity of PIK3C3 during autophagy probably by associating with the PI3K complex II (PI3KC3-C2). Associated with PI3KC3-C2 during autophagy may regulate the trafficking of ATG9A from the Golgi complex to the peripheral cytoplasm for the formation of autophagosomes by inducing Golgi membrane tubulation and fragmentation. Involved in regulation of degradative endocytic trafficking and cytokinesis, probably in the context of PI3KC3-C2. In Rattus norvegicus (Rat), this protein is Endophilin-B1.